The primary structure comprises 321 residues: Transcription factor ATOH8 (321 aa).

2 disordered regions span residues 59–193 and 203–222; these read GLRD…SSYS and HQDS…AASS. Over residues 70 to 85 the composition is skewed to pro residues; sequence VPVPVPVPVPVAPAVP. Over residues 93-109 the composition is skewed to basic and acidic residues; the sequence is AGERGGSRAPEVSDARK. Residues 121–132 are compositionally biased toward pro residues; that stretch reads LPTPPPPPPPAP. Positions 133–143 are enriched in low complexity; it reads QSQAPGGPEAQ. Pro residues predominate over residues 160–186; the sequence is PARPAPSAPPAPPAPPESTVRPAPPTR. A basic motif; degenerate region spans residues 230-243; the sequence is TRRLLANARERTRV. One can recognise a bHLH domain in the interval 230-282; that stretch reads TRRLLANARERTRVHTISAAFEALRKQVPCYSYGQKLSKLAILRIACNYILSL. Positions 244–282 are helix-loop-helix motif; sequence HTISAAFEALRKQVPCYSYGQKLSKLAILRIACNYILSL.

In terms of assembly, efficient DNA binding requires dimerization with another bHLH protein. Interacts with NEUROG3 and NEUROD1. Interacts with ZFPM2; mediates indirect interaction with GATA4. Forms a heterodimer with TCF3; repress transcription of TCF3 and TCF3/NEUROG3 dimer-induced transactivation of E box-dependent promoters. In terms of tissue distribution, expressed in lung, liver, kidney, heart and pancreas. Expressed in endothel of umbilical vessels.

It is found in the nucleus. The protein resides in the nucleus speckle. Its subcellular location is the cytoplasm. In terms of biological role, transcription factor that binds a palindromic (canonical) core consensus DNA sequence 5'-CANNTG- 3' known as an E-box element, possibly as a heterodimer with other bHLH proteins. Regulates endothelial cell proliferation, migration and tube-like structures formation. Modulates endothelial cell differentiation through NOS3. May be implicated in specification and differentiation of neuronal cell lineages in the brain. May participate in kidney development and may be involved in podocyte differentiation. During early embryonic development is involved in tissue-specific differentiation processes that are dependent on class II bHLH factors and namely modulates the differentiation program initiated by the pro-endocrine factor NEUROG3. During myogenesis, may play a role during the transition of myoblasts from the proliferative phase to the differentiation phase. Positively regulates HAMP transcription in two ways, firstly by acting directly on the HAMP promoter via E-boxes binding and indirectly through increased phosphorylation of SMAD protein complex. Repress NEUROG3-dependent gene activation in a gene-specific manner through at least two mechanisms; requires only either the sequestering of a general partner such as TCF3 through heterodimerization, either also requires binding of the bHLH domain to DNA via a basic motif. In Homo sapiens (Human), this protein is Transcription factor ATOH8.